We begin with the raw amino-acid sequence, 837 residues long: Vacuolar membrane protease (837 aa).

Topologically, residues 1-36 (MSEEEVHDTSSEASEVFTNQPNAFVRGVRSIFGYRK) are cytoplasmic. The chain crosses the membrane as a helical span at residues 37–57 (TSLTLFVILTIVVTAGLSFYD). Residues 58 to 355 (NSLELTIELP…FATPISALAR (298 aa)) lie on the Vacuolar side of the membrane. Asparagine 143 carries N-linked (GlcNAc...) asparagine glycosylation. Residues histidine 157 and aspartate 169 each coordinate Zn(2+). Catalysis depends on glutamate 201, which acts as the Proton acceptor. Zn(2+) contacts are provided by glutamate 202, glutamate 227, and histidine 299. The helical transmembrane segment at 356-376 (VNLVLLVLFPVVSTPLLFVIV) threads the bilayer. Residues 377–384 (KYKKWKLR) are Cytoplasmic-facing. The chain crosses the membrane as a helical span at residues 385-405 (VTNFLGVPLAMGLAVAVGQVG). At 406 to 415 (NPMLVSSHPM) the chain is on the vacuolar side. The helical transmembrane segment at 416 to 436 (MVVATTTSIVVLVYYVVLNGV) threads the bilayer. Over 437 to 446 (DWVNTSSDQK) the chain is Cytoplasmic. The helical transmembrane segment at 447–467 (LVTMIEVSFVYWVVLVYVTWS) threads the bilayer. Over 468-474 (GGDHTGE) the chain is Vacuolar. Residues 475-495 (FGVTVLFFVQASTSLLGLIGW) traverse the membrane as a helical segment. Residues 496–539 (TFTRVRGGDEPLLSGEEERYGTEDERDTEKPLVEHNYDWSLQYL) lie on the Cytoplasmic side of the membrane. The chain crosses the membrane as a helical span at residues 540 to 560 (LIVPVSSLVVYNSGWLVLEGV). Asparagine 561 is a glycosylation site (N-linked (GlcNAc...) asparagine). Residues 561–572 (NKTVQESLASEH) are Vacuolar-facing. A helical membrane pass occupies residues 573-593 (LIYWIVVVFSQFLVLPVVPFI). The Cytoplasmic portion of the chain corresponds to 594–598 (TKFNR). Residues 599–619 (YIVLGLSVVAVVGVLMSMAVH) form a helical membrane-spanning segment. Residues 620-837 (PFNQGSPMKL…LVGVVKHVDV (218 aa)) are Vacuolar-facing. Residue asparagine 689 is glycosylated (N-linked (GlcNAc...) asparagine).

Belongs to the peptidase M28 family. It depends on Zn(2+) as a cofactor.

It localises to the vacuole membrane. Its function is as follows. May be involved in vacuolar sorting and osmoregulation. This chain is Vacuolar membrane protease, found in Candida albicans (strain WO-1) (Yeast).